Reading from the N-terminus, the 323-residue chain is CYFIP-related Rac1 interactor A (323 aa).

This sequence belongs to the CYRI family. As to quaternary structure, interacts with RAC1 (GTP-bound form preferentially).

It localises to the membrane. In terms of biological role, may negatively regulate RAC1 signaling and RAC1-driven cytoskeletal remodeling. May regulate chemotaxis, cell migration and epithelial polarization by controlling the polarity, plasticity, duration and extent of protrusions. The protein is CYFIP-related Rac1 interactor A (CYRIA) of Bos taurus (Bovine).